The sequence spans 264 residues: Hemin import ATP-binding protein HmuV (264 aa).

The region spanning 10–246 is the ABC transporter domain; the sequence is LQAQNLSYSI…HTLRKWYQAD (237 aa). 42–49 contacts ATP; sequence GPNGAGKS.

The protein belongs to the ABC transporter superfamily. Heme (hemin) importer (TC 3.A.1.14.5) family. The complex is composed of two ATP-binding proteins (HmuV), two transmembrane proteins (HmuU) and a solute-binding protein (HmuT).

The protein resides in the cell inner membrane. Part of the ABC transporter complex HmuTUV involved in hemin import. Responsible for energy coupling to the transport system. This Photorhabdus laumondii subsp. laumondii (strain DSM 15139 / CIP 105565 / TT01) (Photorhabdus luminescens subsp. laumondii) protein is Hemin import ATP-binding protein HmuV.